The chain runs to 300 residues: Bifunctional protein FolD 2 (300 aa).

NADP(+) is bound by residues 165-167 (GRS), serine 190, and isoleucine 231.

It belongs to the tetrahydrofolate dehydrogenase/cyclohydrolase family. Homodimer.

The enzyme catalyses (6R)-5,10-methylene-5,6,7,8-tetrahydrofolate + NADP(+) = (6R)-5,10-methenyltetrahydrofolate + NADPH. It catalyses the reaction (6R)-5,10-methenyltetrahydrofolate + H2O = (6R)-10-formyltetrahydrofolate + H(+). Its pathway is one-carbon metabolism; tetrahydrofolate interconversion. Its function is as follows. Catalyzes the oxidation of 5,10-methylenetetrahydrofolate to 5,10-methenyltetrahydrofolate and then the hydrolysis of 5,10-methenyltetrahydrofolate to 10-formyltetrahydrofolate. This is Bifunctional protein FolD 2 from Pseudomonas savastanoi pv. phaseolicola (strain 1448A / Race 6) (Pseudomonas syringae pv. phaseolicola (strain 1448A / Race 6)).